Here is a 136-residue protein sequence, read N- to C-terminus: Large ribosomal subunit protein uL16 (136 aa).

It belongs to the universal ribosomal protein uL16 family. As to quaternary structure, part of the 50S ribosomal subunit.

Its function is as follows. Binds 23S rRNA and is also seen to make contacts with the A and possibly P site tRNAs. The sequence is that of Large ribosomal subunit protein uL16 from Ehrlichia ruminantium (strain Gardel).